The sequence spans 439 residues: ATP-dependent protease ATPase subunit HslU (439 aa).

ATP-binding positions include Ile17, 59-64 (GVGKTE), Asp251, Glu317, and Arg389.

Belongs to the ClpX chaperone family. HslU subfamily. A double ring-shaped homohexamer of HslV is capped on each side by a ring-shaped HslU homohexamer. The assembly of the HslU/HslV complex is dependent on binding of ATP.

It is found in the cytoplasm. ATPase subunit of a proteasome-like degradation complex; this subunit has chaperone activity. The binding of ATP and its subsequent hydrolysis by HslU are essential for unfolding of protein substrates subsequently hydrolyzed by HslV. HslU recognizes the N-terminal part of its protein substrates and unfolds these before they are guided to HslV for hydrolysis. This is ATP-dependent protease ATPase subunit HslU from Campylobacter jejuni subsp. jejuni serotype O:2 (strain ATCC 700819 / NCTC 11168).